A 132-amino-acid chain; its full sequence is Small ribosomal subunit protein uS11 (132 aa).

The tract at residues 110 to 132 (IEDVTPVPSDSTRRKGGRRGRRL) is disordered. Residues 123 to 132 (RKGGRRGRRL) are compositionally biased toward basic residues.

Belongs to the universal ribosomal protein uS11 family. As to quaternary structure, component of the small ribosomal subunit. Mature ribosomes consist of a small (40S) and a large (60S) subunit. The 40S subunit contains about 32 different proteins and 1 molecule of RNA (18S). The 60S subunit contains 45 different proteins and 3 molecules of RNA (25S, 5.8S and 5S).

It is found in the cytoplasm. In terms of biological role, component of the ribosome, a large ribonucleoprotein complex responsible for the synthesis of proteins in the cell. The small ribosomal subunit (SSU) binds messenger RNAs (mRNAs) and translates the encoded message by selecting cognate aminoacyl-transfer RNA (tRNA) molecules. The large subunit (LSU) contains the ribosomal catalytic site termed the peptidyl transferase center (PTC), which catalyzes the formation of peptide bonds, thereby polymerizing the amino acids delivered by tRNAs into a polypeptide chain. The nascent polypeptides leave the ribosome through a tunnel in the LSU and interact with protein factors that function in enzymatic processing, targeting, and the membrane insertion of nascent chains at the exit of the ribosomal tunnel. RPS14B is involved in nucleolar processing of pre-18S ribosomal RNA and ribosome assembly. In Candida albicans (strain SC5314 / ATCC MYA-2876) (Yeast), this protein is Small ribosomal subunit protein uS11 (RPS14B).